Reading from the N-terminus, the 41-residue chain is Cytochrome b559 subunit beta (41 aa).

The chain crosses the membrane as a helical span at residues 16-32 (WLAVHALAVPTVFFLGS). A heme-binding site is contributed by H20.

It belongs to the PsbE/PsbF family. In terms of assembly, heterodimer of an alpha subunit and a beta subunit. PSII is composed of 1 copy each of membrane proteins PsbA, PsbB, PsbC, PsbD, PsbE, PsbF, PsbH, PsbI, PsbJ, PsbK, PsbL, PsbM, PsbT, PsbX, PsbY, PsbZ, Psb30/Ycf12, at least 3 peripheral proteins of the oxygen-evolving complex and a large number of cofactors. It forms dimeric complexes. Heme b is required as a cofactor.

The protein localises to the plastid. The protein resides in the chloroplast thylakoid membrane. In terms of biological role, this b-type cytochrome is tightly associated with the reaction center of photosystem II (PSII). PSII is a light-driven water:plastoquinone oxidoreductase that uses light energy to abstract electrons from H(2)O, generating O(2) and a proton gradient subsequently used for ATP formation. It consists of a core antenna complex that captures photons, and an electron transfer chain that converts photonic excitation into a charge separation. This Nephroselmis olivacea (Green alga) protein is Cytochrome b559 subunit beta.